We begin with the raw amino-acid sequence, 270 residues long: UBX domain-containing protein 8 (270 aa).

Methionine 1 is a topological domain (cytoplasmic). Residues 2 to 22 traverse the membrane as a helical segment; sequence ASRGVVGIFFLSAVPLVCLEL. Residues 23–33 lie on the Lumenal side of the membrane; the sequence is RRGIPDIGIKD. A helical membrane pass occupies residues 34 to 54; the sequence is FLLLCGRILLLLALLTLIISV. Over 55-270 the chain is Cytoplasmic; that stretch reads TTSWLNSFKS…LILEEKEQTN (216 aa). Positions 130-171 are disordered; the sequence is SGHKLGGDEGTSQTSFETSNREAAKSQNLPKPLTEFPSPAEQ. Serine 167 is modified (phosphoserine). The 77-residue stretch at 187 to 263 folds into the UBX domain; sequence TAEEVVTVAL…GITVDTVLIL (77 aa).

As to quaternary structure, interacts with SYVN1 and VCP. In terms of tissue distribution, expressed abundantly in ovary and testis, and weakly in all other tissues tested.

Its subcellular location is the endoplasmic reticulum membrane. Involved in endoplasmic reticulum-associated degradation (ERAD) for misfolded lumenal proteins, possibly by tethering VCP to the endoplasmic reticulum membrane. May play a role in reproduction. This Homo sapiens (Human) protein is UBX domain-containing protein 8 (UBXN8).